The following is a 115-amino-acid chain: Nucleoid-associated protein LA_4332 (115 aa).

It belongs to the YbaB/EbfC family. Homodimer.

The protein localises to the cytoplasm. It is found in the nucleoid. Its function is as follows. Binds to DNA and alters its conformation. May be involved in regulation of gene expression, nucleoid organization and DNA protection. This chain is Nucleoid-associated protein LA_4332, found in Leptospira interrogans serogroup Icterohaemorrhagiae serovar Lai (strain 56601).